We begin with the raw amino-acid sequence, 279 residues long: MNLPAATALFTPSWHAELELAYARCGATTRPVLRRHLGPLRVQKHLYAEGPEVCQHIIVHPPGGIAGGDRLAISARVDSGAWAQLTSPGAAKWYRATGPASQTLNLQVAPGATLEWLPQETIVFSAAQAELTTRIELQGDARLFYWDIIALGRPASGERFEQGHFQAHLDLYRDGRPLWHERQRIGGGDGLLDSPIGLDGQPVFATLLVTGEIDSELLERCRALAHPVRGDLSQLPGLLVARCLASEALQARAWLIELWRLLRPALLGREARPPRIWNT.

The protein belongs to the UreD family. As to quaternary structure, ureD, UreF and UreG form a complex that acts as a GTP-hydrolysis-dependent molecular chaperone, activating the urease apoprotein by helping to assemble the nickel containing metallocenter of UreC. The UreE protein probably delivers the nickel.

It is found in the cytoplasm. Functionally, required for maturation of urease via the functional incorporation of the urease nickel metallocenter. This Pseudomonas fluorescens (strain ATCC BAA-477 / NRRL B-23932 / Pf-5) protein is Urease accessory protein UreD.